A 310-amino-acid polypeptide reads, in one-letter code: Thioredoxin reductase (310 aa).

35–42 (ERGMPGGQ) is an FAD binding site. A disulfide bridge links Cys134 with Cys137. 277–286 (DVRDKGLRQI) lines the FAD pocket.

It belongs to the class-II pyridine nucleotide-disulfide oxidoreductase family. Homodimer. The cofactor is FAD.

It localises to the cytoplasm. It catalyses the reaction [thioredoxin]-dithiol + NADP(+) = [thioredoxin]-disulfide + NADPH + H(+). The sequence is that of Thioredoxin reductase (trxB) from Staphylococcus epidermidis (strain ATCC 35984 / DSM 28319 / BCRC 17069 / CCUG 31568 / BM 3577 / RP62A).